The sequence spans 98 residues: Spermatogenesis-associated protein 45 (98 aa).

The protein belongs to the SPATA45 family.

The polypeptide is Spermatogenesis-associated protein 45 (SPATA45) (Homo sapiens (Human)).